Consider the following 167-residue polypeptide: Disulfide bond formation protein B (167 aa).

Residues 1 to 12 lie on the Cytoplasmic side of the membrane; that stretch reads MFLNLLDAPRRL. A helical membrane pass occupies residues 13-29; that stretch reads LALVALGCVALLAFGLY. Over 30-47 the chain is Periplasmic; it reads LQHVVGLEPCPMCIVQRY. Cysteine 39 and cysteine 42 are disulfide-bonded. A helical transmembrane segment spans residues 48 to 63; it reads ALVLVAIVAGLTAITS. Residues 64 to 69 are Cytoplasmic-facing; it reads NKKGLI. Residues 70–87 traverse the membrane as a helical segment; it reads TGSGVLLLLAGFGAFVAA. Over 88–143 the chain is Periplasmic; the sequence is RQSFLQWYPPEVASCGRDFYGMIETFPLQRAIPMIFKGSGDCAKVDWTFLGGSIAN. The cysteines at positions 102 and 129 are disulfide-linked. Residues 144 to 162 form a helical membrane-spanning segment; sequence WSFVCFAVIGLTALTLIAR. The Cytoplasmic segment spans residues 163-167; the sequence is LARQR.

It belongs to the DsbB family.

Its subcellular location is the cell inner membrane. In terms of biological role, required for disulfide bond formation in some periplasmic proteins. Acts by oxidizing the DsbA protein. This chain is Disulfide bond formation protein B, found in Polaromonas naphthalenivorans (strain CJ2).